The chain runs to 101 residues: uncharacterized protein (101 aa).

Its subcellular location is the mitochondrion. This is an uncharacterized protein from Arabidopsis thaliana (Mouse-ear cress).